The primary structure comprises 60 residues: Large ribosomal subunit protein bL32 (60 aa).

Residues 1–60 are disordered; that stretch reads MAVQQNKKSPSKRGMHRSHDFLVNPPTAIEPTTGESHLRHHISPNGFYRGRKILKTKADE. Over residues 49 to 60 the composition is skewed to basic residues; the sequence is RGRKILKTKADE.

This sequence belongs to the bacterial ribosomal protein bL32 family.

In Bordetella avium (strain 197N), this protein is Large ribosomal subunit protein bL32.